A 197-amino-acid polypeptide reads, in one-letter code: GTP cyclohydrolase 1 (197 aa).

3 residues coordinate Zn(2+): C88, H91, and C160.

The protein belongs to the GTP cyclohydrolase I family. In terms of assembly, homomer.

It carries out the reaction GTP + H2O = 7,8-dihydroneopterin 3'-triphosphate + formate + H(+). It functions in the pathway cofactor biosynthesis; 7,8-dihydroneopterin triphosphate biosynthesis; 7,8-dihydroneopterin triphosphate from GTP: step 1/1. The protein is GTP cyclohydrolase 1 of Clostridium beijerinckii (strain ATCC 51743 / NCIMB 8052) (Clostridium acetobutylicum).